A 193-amino-acid polypeptide reads, in one-letter code: Acyl carrier protein phosphodiesterase (193 aa).

This sequence belongs to the AcpH family.

The catalysed reaction is holo-[ACP] + H2O = apo-[ACP] + (R)-4'-phosphopantetheine + H(+). Functionally, converts holo-ACP to apo-ACP by hydrolytic cleavage of the phosphopantetheine prosthetic group from ACP. The chain is Acyl carrier protein phosphodiesterase from Salmonella agona (strain SL483).